The sequence spans 53 residues: MPITLDPEKLAIVMKHKFQYKICRECGARNPPDAEKCRRCRSRNLRPKKFKKK.

It belongs to the eukaryotic ribosomal protein eL40 family.

This is Large ribosomal subunit protein eL40 from Pyrobaculum islandicum (strain DSM 4184 / JCM 9189 / GEO3).